The sequence spans 425 residues: Probable isoprenylcysteine alpha-carbonyl methylesterase ICMEL1 (425 aa).

Basic and acidic residues predominate over residues 1–10 (MQVELADRAA). A disordered region spans residues 1 to 42 (MQVELADRAAARPSETGEAPPSSPAAAAAASAAAEDAPLLPG). The span at 24-34 (PAAAAAASAAA) shows a compositional bias: low complexity. 2 helical membrane-spanning segments follow: residues 99–119 (FLAL…VVYY) and 154–174 (VVAF…GALL). Substrate contacts are provided by residues 160–162 (GGA) and 231–233 (QSA). Active-site residues include serine 232, aspartate 334, and histidine 366.

The protein belongs to the AB hydrolase superfamily. Isoprenylcysteine methylesterase family.

It localises to the endoplasmic reticulum membrane. Its subcellular location is the golgi apparatus membrane. The enzyme catalyses [protein]-C-terminal S-[(2E,6E)-farnesyl]-L-cysteine methyl ester + H2O = [protein]-C-terminal S-[(2E,6E)-farnesyl]-L-cysteine + methanol + H(+). Functionally, catalyzes the demethylation of isoprenylcysteine methylesters. This chain is Probable isoprenylcysteine alpha-carbonyl methylesterase ICMEL1 (IMCEL1), found in Oryza sativa subsp. japonica (Rice).